We begin with the raw amino-acid sequence, 34 residues long: Photosystem II reaction center protein Psb30 (34 aa).

The helical transmembrane segment at 6-26 (VIGQLTSLAMIVLVGPAVIVV) threads the bilayer.

This sequence belongs to the Psb30/Ycf12 family. PSII is composed of 1 copy each of membrane proteins PsbA, PsbB, PsbC, PsbD, PsbE, PsbF, PsbH, PsbI, PsbJ, PsbK, PsbL, PsbM, PsbT, PsbX, PsbY, PsbZ, Psb30/Ycf12, peripheral proteins of the oxygen-evolving complex and a large number of cofactors. It forms dimeric complexes.

The protein localises to the plastid. It localises to the chloroplast thylakoid membrane. In terms of biological role, a core subunit of photosystem II (PSII), probably helps stabilize the reaction center. This is Photosystem II reaction center protein Psb30 from Gracilaria tenuistipitata var. liui (Red alga).